A 376-amino-acid chain; its full sequence is tRNA-specific 2-thiouridylase MnmA (376 aa).

ATP-binding positions include 19–26 (GMSGGVDS) and Met-45. The interval 105-107 (NPD) is interaction with target base in tRNA. Catalysis depends on Cys-110, which acts as the Nucleophile. Cysteines 110 and 210 form a disulfide. Gly-134 contributes to the ATP binding site. The interaction with tRNA stretch occupies residues 160–162 (KDQ). The Cysteine persulfide intermediate role is filled by Cys-210. Residues 326–327 (RY) are interaction with tRNA.

The protein belongs to the MnmA/TRMU family.

It localises to the cytoplasm. It carries out the reaction S-sulfanyl-L-cysteinyl-[protein] + uridine(34) in tRNA + AH2 + ATP = 2-thiouridine(34) in tRNA + L-cysteinyl-[protein] + A + AMP + diphosphate + H(+). Its function is as follows. Catalyzes the 2-thiolation of uridine at the wobble position (U34) of tRNA, leading to the formation of s(2)U34. The sequence is that of tRNA-specific 2-thiouridylase MnmA from Bordetella petrii (strain ATCC BAA-461 / DSM 12804 / CCUG 43448).